Consider the following 688-residue polypeptide: Envelope glycoprotein gp70 (688 aa).

An N-terminal signal peptide occupies residues 1-98 (MPNHQSGSPT…SVLGPPPVSG (98 aa)). Residues 99 to 624 (ESYWAYLPKP…ALNPLDWTQY (526 aa)) lie on the Extracellular side of the membrane. Residues Asn127 and Asn143 are each glycosylated (N-linked (GlcNAc...) asparagine; by host). The stretch at 426–474 (LLPVDIGDEPWFDDSAIQTFRYATDLIRAKRFVAAIILGISALIAIITS) forms a coiled coil. Residues 455-456 (KR) constitute a propeptide that is removed on maturation. The segment at 457-477 (FVAAIILGISALIAIITSFAV) is fusion peptide. Residues 463–481 (LGISALIAIITSFAVATTA) form an immunosuppression region. Asn498 carries N-linked (GlcNAc...) asparagine; by host glycosylation. A coiled-coil region spans residues 511 to 541 (LKLEARLNALEEVVLDLGQDVANLKTRMSTR). N-linked (GlcNAc...) asparagine; by host glycosylation occurs at Asn557. A helical membrane pass occupies residues 625–645 (FIFIGVGALLLVIVLMIFPIV). The Cytoplasmic portion of the chain corresponds to 646-688 (FQCLAKSLDQVQSDLNVLLLKKKKGGNAAPAAEMVELPRVSYT).

In terms of assembly, the mature envelope protein (Env) consists of a trimer of SU-TM heterodimers attached by non-covalent interactions or by a labile interchain disulfide bond. Specific enzymatic cleavages in vivo yield mature proteins. Envelope glycoproteins are synthesized as an inactive precursor that is N-glycosylated and processed likely by host cell furin or by a furin-like protease in the Golgi to yield the mature SU and TM proteins. The cleavage site between SU and TM requires the minimal sequence [KR]-X-[KR]-R.

It localises to the virion membrane. It is found in the host cell membrane. In terms of biological role, the surface protein (SU) attaches the virus to the host cell by binding to its receptor. This interaction triggers the refolding of the transmembrane protein (TM) and is thought to activate its fusogenic potential by unmasking its fusion peptide. Fusion occurs at the host cell plasma membrane. Its function is as follows. The transmembrane protein (TM) acts as a class I viral fusion protein. Under the current model, the protein has at least 3 conformational states: pre-fusion native state, pre-hairpin intermediate state, and post-fusion hairpin state. During viral and target cell membrane fusion, the coiled coil regions (heptad repeats) assume a trimer-of-hairpins structure, positioning the fusion peptide in close proximity to the C-terminal region of the ectodomain. The formation of this structure appears to drive apposition and subsequent fusion of viral and target cell membranes. Membranes fusion leads to delivery of the nucleocapsid into the cytoplasm. The chain is Envelope glycoprotein gp70 (env) from Mouse mammary tumor virus (strain C3H) (MMTV).